We begin with the raw amino-acid sequence, 299 residues long: Ophiobolin family sesterterpenoid biosynthesis cluster acetyltransferase (299 aa).

The N-terminal stretch at 1–20 (MYFFRALLSPVVLWPALVSG) is a signal peptide. N-linked (GlcNAc...) asparagine glycans are attached at residues N28, N58, N77, N126, N177, N212, and N282.

Belongs to the bfoA family.

It functions in the pathway secondary metabolite biosynthesis; terpenoid biosynthesis. Its function is as follows. Acetyltransferase; part of the gene cluster that mediates the biosynthesis of an ophiobolin family sesterterpenoid. Functionally, sesterterpenoid synthase; part of the gene cluster that mediates the biosynthesis of an ophiobolin family sesterterpenoid. In Aspergillus terreus, this protein is Ophiobolin family sesterterpenoid biosynthesis cluster acetyltransferase.